The sequence spans 90 residues: ATP synthase subunit c (90 aa).

The next 2 membrane-spanning stretches (helical) occupy residues 17–37 (PLAY…AGVV) and 70–90 (LAIV…IIFV).

It belongs to the ATPase C chain family. As to quaternary structure, F-type ATPases have 2 components, F(1) - the catalytic core - and F(0) - the membrane proton channel. F(1) has five subunits: alpha(3), beta(3), gamma(1), delta(1), epsilon(1). F(0) has three main subunits: a(1), b(2) and c(10-14). The alpha and beta chains form an alternating ring which encloses part of the gamma chain. F(1) is attached to F(0) by a central stalk formed by the gamma and epsilon chains, while a peripheral stalk is formed by the delta and b chains.

It is found in the cell membrane. In terms of biological role, f(1)F(0) ATP synthase produces ATP from ADP in the presence of a proton or sodium gradient. F-type ATPases consist of two structural domains, F(1) containing the extramembraneous catalytic core and F(0) containing the membrane proton channel, linked together by a central stalk and a peripheral stalk. During catalysis, ATP synthesis in the catalytic domain of F(1) is coupled via a rotary mechanism of the central stalk subunits to proton translocation. Functionally, key component of the F(0) channel; it plays a direct role in translocation across the membrane. A homomeric c-ring of between 10-14 subunits forms the central stalk rotor element with the F(1) delta and epsilon subunits. The chain is ATP synthase subunit c from Metamycoplasma arthritidis (strain 158L3-1) (Mycoplasma arthritidis).